The chain runs to 239 residues: Transcriptional regulatory protein BtsR (239 aa).

Positions 3–116 constitute a Response regulatory domain; it reads KVLIVDDEPL…RLEKTLARLR (114 aa). Asp-54 is subject to 4-aspartylphosphate. The HTH LytTR-type domain maps to 137–239; the sequence is IPCTGHSRIY…LKSLKEAIGL (103 aa).

Post-translationally, phosphorylated by BtsS.

In terms of biological role, member of the two-component regulatory system BtsS/BtsR. BtsR regulates expression of btsT by binding to its promoter region. The polypeptide is Transcriptional regulatory protein BtsR (Shigella flexneri).